A 425-amino-acid polypeptide reads, in one-letter code: MAGPTLLKESGPREVFCGLTSIVWLHRRMPDAFFLVVGSRTCAHLIQSAAGVMIFAEPRFGTAILSERDLAGLADAHEELDRVARELLQRRPEIRTLFLVGSCPSEVIKLDLARAAERLNDELQGRVRVVNYSGSGIETTFTQGEDGALAALVPLLPSSAERQLLLVGTLADAVEDRLIHLFGRLGIDRVRSLPPRQSTALPPVGPGTTVLLTQPFLTDTARLLRNRGATVLTAPFPLGAEGSRRWMEAAAQAFEVAPSHVATVLDPLMERARIALEPHREVLAGKRIFLLPESQLELPLARFLQRECGMELVEVGTPYLNREQMAEELALLPEGTPVMEGQHVELQLDRVRDSAPDLVVCGMGLANPLEAEGIATKWSIELVFSPIHGIDQAGDLAELFSRPLRRRQLIHPGLHPTQPDQPVHA.

[4Fe-4S] cluster contacts are provided by cysteine 17, cysteine 42, and cysteine 103.

This sequence belongs to the BchN/ChlN family. As to quaternary structure, protochlorophyllide reductase is composed of three subunits; ChlL, ChlN and ChlB. Forms a heterotetramer of two ChlB and two ChlN subunits. [4Fe-4S] cluster serves as cofactor.

It carries out the reaction chlorophyllide a + oxidized 2[4Fe-4S]-[ferredoxin] + 2 ADP + 2 phosphate = protochlorophyllide a + reduced 2[4Fe-4S]-[ferredoxin] + 2 ATP + 2 H2O. It functions in the pathway porphyrin-containing compound metabolism; chlorophyll biosynthesis (light-independent). Functionally, component of the dark-operative protochlorophyllide reductase (DPOR) that uses Mg-ATP and reduced ferredoxin to reduce ring D of protochlorophyllide (Pchlide) to form chlorophyllide a (Chlide). This reaction is light-independent. The NB-protein (ChlN-ChlB) is the catalytic component of the complex. This is Light-independent protochlorophyllide reductase subunit N from Parasynechococcus marenigrum (strain WH8102).